The primary structure comprises 220 residues: ATP-dependent Clp protease proteolytic subunit (220 aa).

Residue serine 125 is the Nucleophile of the active site. The active site involves histidine 150.

Belongs to the peptidase S14 family. As to quaternary structure, fourteen ClpP subunits assemble into 2 heptameric rings which stack back to back to give a disk-like structure with a central cavity, resembling the structure of eukaryotic proteasomes.

Its subcellular location is the cytoplasm. It catalyses the reaction Hydrolysis of proteins to small peptides in the presence of ATP and magnesium. alpha-casein is the usual test substrate. In the absence of ATP, only oligopeptides shorter than five residues are hydrolyzed (such as succinyl-Leu-Tyr-|-NHMec, and Leu-Tyr-Leu-|-Tyr-Trp, in which cleavage of the -Tyr-|-Leu- and -Tyr-|-Trp bonds also occurs).. Cleaves peptides in various proteins in a process that requires ATP hydrolysis. Has a chymotrypsin-like activity. Plays a major role in the degradation of misfolded proteins. This Bacteroides fragilis (strain YCH46) protein is ATP-dependent Clp protease proteolytic subunit.